Reading from the N-terminus, the 187-residue chain is Endoribonuclease YbeY (187 aa).

Residues histidine 151, histidine 155, and histidine 161 each coordinate Zn(2+).

Belongs to the endoribonuclease YbeY family. Zn(2+) is required as a cofactor.

The protein resides in the cytoplasm. In terms of biological role, single strand-specific metallo-endoribonuclease involved in late-stage 70S ribosome quality control and in maturation of the 3' terminus of the 16S rRNA. The sequence is that of Endoribonuclease YbeY from Prochlorococcus marinus (strain MIT 9313).